The chain runs to 480 residues: Gasdermin-C4 (480 aa).

The tract at residues 1-226 (MGYSFDRASK…TCVILPSATK (226 aa)) is triggers pyroptosis.

This sequence belongs to the gasdermin family. As to quaternary structure, homooligomer; homooligomeric ring-shaped pore complex containing 27-28 subunits when inserted in the membrane. Post-translationally, cleavage by CASP8 relieves autoinhibition by releasing the N-terminal moiety (Gasdermin-C4, N-terminal) that initiates pyroptosis. Palmitoylated.

Its subcellular location is the cytoplasm. It is found in the cytosol. The protein resides in the cell membrane. Its activity is regulated as follows. The full-length protein before cleavage is inactive: intramolecular interactions between N- and C-terminal domains mediate autoinhibition in the absence of activation signal. The intrinsic pyroptosis-inducing activity is carried by the released N-terminal moiety (Gasdermin-C4, N-terminal) following cleavage by caspase CASP8. This form constitutes the precursor of the pore-forming protein: upon cleavage, the released N-terminal moiety (Gasdermin-C4, N-terminal) binds to membranes and forms pores, triggering pyroptosis. In terms of biological role, pore-forming protein that causes membrane permeabilization and pyroptosis. Produced by the cleavage of gasdermin-C4 by caspase CASP8 in response to death signals. After cleavage, moves to the plasma membrane where it strongly binds to membrane inner leaflet lipids. Homooligomerizes within the membrane and forms pores of 10-15 nanometers (nm) of inner diameter, triggering pyroptosis. In Mus musculus (Mouse), this protein is Gasdermin-C4.